Reading from the N-terminus, the 648-residue chain is Cysteine-rich receptor-like protein kinase 38 (648 aa).

An N-terminal signal peptide occupies residues 1–25; the sequence is MKNSAAIFLTSSLILLLQTLHGVKA. Gnk2-homologous domains are found at residues 26 to 127 and 140 to 247; these read GFIC…DQST and PSPV…FYPF. At 26 to 278 the chain is on the extracellular side; the sequence is GFICVGSSFP…EAISITRLKG (253 aa). Asparagine 37, asparagine 63, asparagine 151, asparagine 174, and asparagine 253 each carry an N-linked (GlcNAc...) asparagine glycan. The helical transmembrane segment at 279–299 threads the bilayer; sequence GIIAIFVVPIVINLLVFIGLI. The Cytoplasmic portion of the chain corresponds to 300-648; that stretch reads RAYTRIRKSY…ELSITELSPR (349 aa). In terms of domain architecture, Protein kinase spans 339-611; sequence FSFENKIGQG…VIQWLGSETI (273 aa). ATP is bound by residues 345–353 and lysine 367; that span reads IGQGGFGSV. Phosphotyrosine is present on tyrosine 412. The active-site Proton acceptor is aspartate 464. Phosphoserine is present on serine 468. The residue at position 504 (threonine 504) is a Phosphothreonine. Phosphotyrosine is present on tyrosine 512.

This sequence belongs to the protein kinase superfamily. Ser/Thr protein kinase family. CRK subfamily.

It is found in the membrane. It carries out the reaction L-seryl-[protein] + ATP = O-phospho-L-seryl-[protein] + ADP + H(+). The catalysed reaction is L-threonyl-[protein] + ATP = O-phospho-L-threonyl-[protein] + ADP + H(+). This Arabidopsis thaliana (Mouse-ear cress) protein is Cysteine-rich receptor-like protein kinase 38 (CRK38).